The primary structure comprises 106 residues: Nucleoid-associated protein Smlt1015 (106 aa).

A disordered region spans residues 81-106; the sequence is IDAESKSKMGSATAGMQLPPGMKLPF.

This sequence belongs to the YbaB/EbfC family. Homodimer.

The protein localises to the cytoplasm. The protein resides in the nucleoid. Binds to DNA and alters its conformation. May be involved in regulation of gene expression, nucleoid organization and DNA protection. In Stenotrophomonas maltophilia (strain K279a), this protein is Nucleoid-associated protein Smlt1015.